We begin with the raw amino-acid sequence, 329 residues long: D-threo-aldose 1-dehydrogenase (329 aa).

Catalysis depends on tyrosine 58, which acts as the Proton donor. Histidine 145 is a binding site for substrate.

Belongs to the aldo/keto reductase family.

The enzyme catalyses a D-threo-aldose + NAD(+) = a D-threo-aldono-1,5-lactone + NADH + H(+). With respect to regulation, inhibited strongly by Hg(2+), Cd(2+) and para-chloromercuribenzoic acid (PCMB) and weakly by Zn(2+) and iodoacetamide. Also inhibited strongly by L-xylose but not D-glucose. Its function is as follows. Catalyzes the oxidation of L-fucose to L-fuconolactone in the presence of NADP(+). Also active against L-galactose and, to a much lesser degree, D-arabinose. Uses NADP(+) as a hydrogen acceptor much more efficiently than NAD(+). This chain is D-threo-aldose 1-dehydrogenase, found in Pseudomonas sp.